The sequence spans 21 residues: Fibrinogen beta chain (21 aa).

Q1 carries the post-translational modification Pyrrolidone carboxylic acid. The segment covering 1 to 11 (QHSTDYDEEEE) has biased composition (acidic residues). The interval 1–21 (QHSTDYDEEEEDRAKLHLDAR) is disordered. T4 carries an O-linked (GalNAc...) threonine glycan. Position 6 is a sulfotyrosine (Y6). Basic and acidic residues predominate over residues 12–21 (DRAKLHLDAR).

Heterohexamer; disulfide linked. Contains 2 sets of 3 non-identical chains (alpha, beta and gamma). The 2 heterotrimers are in head to head conformation with the N-termini in a small central domain. Conversion of fibrinogen to fibrin is triggered by thrombin, which cleaves fibrinopeptides A and B from alpha and beta chains, and thus exposes the N-terminal polymerization sites responsible for the formation of the soft clot.

The protein localises to the secreted. Cleaved by the protease thrombin to yield monomers which, together with fibrinogen alpha (FGA) and fibrinogen gamma (FGG), polymerize to form an insoluble fibrin matrix. Fibrin has a major function in hemostasis as one of the primary components of blood clots. In addition, functions during the early stages of wound repair to stabilize the lesion and guide cell migration during re-epithelialization. Was originally thought to be essential for platelet aggregation, based on in vitro studies using anticoagulated blood. However subsequent studies have shown that it is not absolutely required for thrombus formation in vivo. Enhances expression of SELP in activated platelets. Maternal fibrinogen is essential for successful pregnancy. Fibrin deposition is also associated with infection, where it protects against IFNG-mediated hemorrhage. May also facilitate the antibacterial immune response via both innate and T-cell mediated pathways. This is Fibrinogen beta chain (FGB) from Cervus elaphus (Red deer).